The primary structure comprises 440 residues: uncharacterized protein (440 aa).

An N-terminal signal peptide occupies residues 1-19 (MKKLLLAASIIYFASVSLA).

This is an uncharacterized protein from Rickettsia typhi (strain ATCC VR-144 / Wilmington).